A 157-amino-acid chain; its full sequence is Protein Smg (157 aa).

The protein belongs to the Smg family.

The chain is Protein Smg from Pectobacterium atrosepticum (strain SCRI 1043 / ATCC BAA-672) (Erwinia carotovora subsp. atroseptica).